An 896-amino-acid polypeptide reads, in one-letter code: Alanine--tRNA ligase (896 aa).

Zn(2+) is bound by residues H581, H585, C684, and H688.

It belongs to the class-II aminoacyl-tRNA synthetase family. The cofactor is Zn(2+).

The protein localises to the cytoplasm. The enzyme catalyses tRNA(Ala) + L-alanine + ATP = L-alanyl-tRNA(Ala) + AMP + diphosphate. Functionally, catalyzes the attachment of alanine to tRNA(Ala) in a two-step reaction: alanine is first activated by ATP to form Ala-AMP and then transferred to the acceptor end of tRNA(Ala). Also edits incorrectly charged Ser-tRNA(Ala) and Gly-tRNA(Ala) via its editing domain. In Renibacterium salmoninarum (strain ATCC 33209 / DSM 20767 / JCM 11484 / NBRC 15589 / NCIMB 2235), this protein is Alanine--tRNA ligase.